We begin with the raw amino-acid sequence, 339 residues long: tRNA(Ile)-lysidine synthase (339 aa).

34 to 39 lines the ATP pocket; sequence SGGPDS.

The protein belongs to the tRNA(Ile)-lysidine synthase family.

Its subcellular location is the cytoplasm. The enzyme catalyses cytidine(34) in tRNA(Ile2) + L-lysine + ATP = lysidine(34) in tRNA(Ile2) + AMP + diphosphate + H(+). Its function is as follows. Ligates lysine onto the cytidine present at position 34 of the AUA codon-specific tRNA(Ile) that contains the anticodon CAU, in an ATP-dependent manner. Cytidine is converted to lysidine, thus changing the amino acid specificity of the tRNA from methionine to isoleucine. This chain is tRNA(Ile)-lysidine synthase, found in Methylobacterium nodulans (strain LMG 21967 / CNCM I-2342 / ORS 2060).